The following is a 452-amino-acid chain: Pup--protein ligase (452 aa).

Residue E9 participates in Mg(2+) binding. Residue R53 coordinates ATP. Y55 is a binding site for Mg(2+). The active-site Proton acceptor is the D57. Residue E63 coordinates Mg(2+). ATP contacts are provided by T66 and W419.

Belongs to the Pup ligase/Pup deamidase family. Pup-conjugating enzyme subfamily.

It catalyses the reaction ATP + [prokaryotic ubiquitin-like protein]-L-glutamate + [protein]-L-lysine = ADP + phosphate + N(6)-([prokaryotic ubiquitin-like protein]-gamma-L-glutamyl)-[protein]-L-lysine.. The protein operates within protein degradation; proteasomal Pup-dependent pathway. It functions in the pathway protein modification; protein pupylation. In terms of biological role, catalyzes the covalent attachment of the prokaryotic ubiquitin-like protein modifier Pup to the proteasomal substrate proteins, thereby targeting them for proteasomal degradation. This tagging system is termed pupylation. The ligation reaction involves the side-chain carboxylate of the C-terminal glutamate of Pup and the side-chain amino group of a substrate lysine. In Salinispora tropica (strain ATCC BAA-916 / DSM 44818 / JCM 13857 / NBRC 105044 / CNB-440), this protein is Pup--protein ligase.